The chain runs to 203 residues: A-type ATP synthase subunit E (203 aa).

The protein belongs to the V-ATPase E subunit family. Has multiple subunits with at least A(3), B(3), C, D, E, F, H, I and proteolipid K(x).

The protein localises to the cell membrane. Component of the A-type ATP synthase that produces ATP from ADP in the presence of a proton gradient across the membrane. This is A-type ATP synthase subunit E from Methanococcus maripaludis (strain DSM 14266 / JCM 13030 / NBRC 101832 / S2 / LL).